The following is a 241-amino-acid chain: Chaperone protein HifB (241 aa).

An N-terminal signal peptide occupies residues 1-27 (MGKTMFKKTLLFFTALFFTALCAFSAN).

This sequence belongs to the periplasmic pilus chaperone family.

The protein localises to the periplasm. Its function is as follows. Mediates assembly of pili by forming soluble multimeric complexes with pili subunits as an intermediate step in the assembly process. This protein is involved in type B pili (HifA) assembly. This is Chaperone protein HifB (hifB) from Haemophilus influenzae.